The chain runs to 382 residues: Farnesyl diphosphate synthase (382 aa).

3 residues coordinate isopentenyl diphosphate: K81, R84, and Q120. Residues D127 and D131 each coordinate Mg(2+). R136 provides a ligand contact to dimethylallyl diphosphate. R137 contacts isopentenyl diphosphate. K230, T231, Q270, K287, and K296 together coordinate dimethylallyl diphosphate.

Belongs to the FPP/GGPP synthase family. Mg(2+) serves as cofactor.

The protein resides in the cytoplasm. It carries out the reaction isopentenyl diphosphate + dimethylallyl diphosphate = (2E)-geranyl diphosphate + diphosphate. The enzyme catalyses isopentenyl diphosphate + (2E)-geranyl diphosphate = (2E,6E)-farnesyl diphosphate + diphosphate. The protein operates within isoprenoid biosynthesis; farnesyl diphosphate biosynthesis; farnesyl diphosphate from geranyl diphosphate and isopentenyl diphosphate: step 1/1. Its pathway is isoprenoid biosynthesis; geranyl diphosphate biosynthesis; geranyl diphosphate from dimethylallyl diphosphate and isopentenyl diphosphate: step 1/1. Inhibited by aminobisphosphonate drugs (aBP), such as risedronate and alendronate. Key enzyme in isoprenoid biosynthesis which catalyzes the formation of farnesyl diphosphate (FPP), a sterol precursor. Involved in the inhibition of cell growth. This Dictyostelium discoideum (Social amoeba) protein is Farnesyl diphosphate synthase (fps).